A 316-amino-acid polypeptide reads, in one-letter code: MQSSGETDILATIGTRGSALALAQANEVRDRLARAHQVAPERIVIKTIRTSGDAIQDRPLFDVGGKGLFTKEIEEALLAGSIDFAVHSSKDVPTFLPDATWLPAFLPREDVRDAFISPRAASLNDLPAGSIVGTASLRRQAMVLRLRPDLKVSVIRGNVETRLRKLVAGEADATLLALAGLNRLGLQDRATRILETDEFLPAVGQGAIAIESRRDDDRINAFVKAIGDSETEVALSAERSFLALLDGSCRTPIGGHCRVNGDRIHFRGLIISPDGTQSYETTREGARADAAALGADAARELRERAGEKFFTLFAGA.

C249 carries the post-translational modification S-(dipyrrolylmethanemethyl)cysteine.

It belongs to the HMBS family. In terms of assembly, monomer. Requires dipyrromethane as cofactor.

The catalysed reaction is 4 porphobilinogen + H2O = hydroxymethylbilane + 4 NH4(+). Its pathway is porphyrin-containing compound metabolism; protoporphyrin-IX biosynthesis; coproporphyrinogen-III from 5-aminolevulinate: step 2/4. In terms of biological role, tetrapolymerization of the monopyrrole PBG into the hydroxymethylbilane pre-uroporphyrinogen in several discrete steps. This is Porphobilinogen deaminase from Nitrobacter hamburgensis (strain DSM 10229 / NCIMB 13809 / X14).